Here is a 442-residue protein sequence, read N- to C-terminus: tRNA-2-methylthio-N(6)-dimethylallyladenosine synthase (442 aa).

The region spanning 5–122 (KRIFIKTFGC…LPDMIESKRR (118 aa)) is the MTTase N-terminal domain. 6 residues coordinate [4Fe-4S] cluster: cysteine 14, cysteine 51, cysteine 85, cysteine 159, cysteine 163, and cysteine 166. The Radical SAM core domain maps to 145–377 (RVEGAAAFLS…QALNEAQGKA (233 aa)). A TRAM domain is found at 380–442 (ASMVGSIQRV…LSHTLRGELV (63 aa)).

This sequence belongs to the methylthiotransferase family. MiaB subfamily. Monomer. Requires [4Fe-4S] cluster as cofactor.

The protein localises to the cytoplasm. It carries out the reaction N(6)-dimethylallyladenosine(37) in tRNA + (sulfur carrier)-SH + AH2 + 2 S-adenosyl-L-methionine = 2-methylsulfanyl-N(6)-dimethylallyladenosine(37) in tRNA + (sulfur carrier)-H + 5'-deoxyadenosine + L-methionine + A + S-adenosyl-L-homocysteine + 2 H(+). Catalyzes the methylthiolation of N6-(dimethylallyl)adenosine (i(6)A), leading to the formation of 2-methylthio-N6-(dimethylallyl)adenosine (ms(2)i(6)A) at position 37 in tRNAs that read codons beginning with uridine. This is tRNA-2-methylthio-N(6)-dimethylallyladenosine synthase from Methylobacillus flagellatus (strain ATCC 51484 / DSM 6875 / VKM B-1610 / KT).